The sequence spans 189 residues: Ribosome maturation factor RimM (189 aa).

The region spanning 95 to 177 (EDDEFYYADL…AGLVDDPEEL (83 aa)) is the PRC barrel domain.

It belongs to the RimM family. As to quaternary structure, binds ribosomal protein uS19.

The protein resides in the cytoplasm. Functionally, an accessory protein needed during the final step in the assembly of 30S ribosomal subunit, possibly for assembly of the head region. Essential for efficient processing of 16S rRNA. May be needed both before and after RbfA during the maturation of 16S rRNA. It has affinity for free ribosomal 30S subunits but not for 70S ribosomes. The chain is Ribosome maturation factor RimM from Rhizobium leguminosarum bv. trifolii (strain WSM2304).